The following is a 368-amino-acid chain: Putative alcohol dehydrogenase D (368 aa).

C40, H61, C91, C94, C97, C105, and C167 together coordinate Zn(2+).

This sequence belongs to the zinc-containing alcohol dehydrogenase family. The cofactor is Zn(2+).

The catalysed reaction is a primary alcohol + NAD(+) = an aldehyde + NADH + H(+). The enzyme catalyses a secondary alcohol + NAD(+) = a ketone + NADH + H(+). Functionally, required for maintaining the appropriate mycolic acid composition and permeability of the envelope on its exposure to acidic pH. This is Putative alcohol dehydrogenase D (adhD) from Mycobacterium tuberculosis (strain CDC 1551 / Oshkosh).